A 337-amino-acid chain; its full sequence is Eukaryotic translation initiation factor 3 subunit H (337 aa).

The MPN domain occupies 21–153 (VQCDGLAVMK…LKAYRLTPQA (133 aa)).

The protein belongs to the eIF-3 subunit H family. Component of the eukaryotic translation initiation factor 3 (eIF-3) complex. The eIF-3 complex interacts with pix. Interacts with mxt.

The protein resides in the cytoplasm. Its function is as follows. Component of the eukaryotic translation initiation factor 3 (eIF-3) complex, which is involved in protein synthesis of a specialized repertoire of mRNAs and, together with other initiation factors, stimulates binding of mRNA and methionyl-tRNAi to the 40S ribosome. The eIF-3 complex specifically targets and initiates translation of a subset of mRNAs involved in cell proliferation. This is Eukaryotic translation initiation factor 3 subunit H from Drosophila ananassae (Fruit fly).